Consider the following 492-residue polypeptide: Transmembrane protein 104 homolog (492 aa).

The Cytoplasmic segment spans residues Met-1 to Val-17. Residues Gly-18–Phe-38 form a helical membrane-spanning segment. Topologically, residues Gln-39–Leu-44 are extracellular. The helical transmembrane segment at Leu-45 to Ile-65 threads the bilayer. Topologically, residues Glu-66 to Lys-113 are cytoplasmic. Residues Val-114 to Tyr-134 form a helical membrane-spanning segment. The Extracellular segment spans residues Ser-135–Arg-176. N-linked (GlcNAc...) asparagine glycosylation occurs at Asn-151. The helical transmembrane segment at Phe-177–Lys-197 threads the bilayer. The Cytoplasmic portion of the chain corresponds to Thr-198–Arg-209. The helical transmembrane segment at Trp-210–Ala-230 threads the bilayer. Over Ala-231–Asn-237 the chain is Extracellular. A helical transmembrane segment spans residues Phe-238–Ile-258. Over Pro-259–Lys-274 the chain is Cytoplasmic. The chain crosses the membrane as a helical span at residues Ile-275–Phe-295. At Ala-296–Phe-324 the chain is on the extracellular side. An N-linked (GlcNAc...) asparagine glycan is attached at Asn-313. A helical transmembrane segment spans residues Leu-325–Ile-345. The Cytoplasmic segment spans residues Asn-346 to Ser-392. Residues Val-393 to Thr-413 traverse the membrane as a helical segment. Residues Asp-414 to Asp-415 are Extracellular-facing. The helical transmembrane segment at Met-416 to Pro-436 threads the bilayer. Topologically, residues Cys-437–Pro-466 are cytoplasmic. A helical membrane pass occupies residues Ile-467–Leu-487. The Extracellular portion of the chain corresponds to Val-488–Phe-492.

Belongs to the TMEM104 family.

It localises to the membrane. This is Transmembrane protein 104 homolog from Caenorhabditis elegans.